Here is a 513-residue protein sequence, read N- to C-terminus: Cytochrome P450 705A1 (513 aa).

Residues 9–29 traverse the membrane as a helical segment; that stretch reads QNCFIIILLCSFSLISYFVFF. A heme-binding site is contributed by Cys-448.

Belongs to the cytochrome P450 family. Requires heme as cofactor. In terms of tissue distribution, expressed in root stele, root cortex, root epidermis, root pericycle of the root hair zone, and quiescent center at the root meristematic zone.

The protein localises to the membrane. Functionally, cleaves the arabidiol side chain at C15 to form 14-apo-arabidiol and a side-chain fragment. Involved in the biosynthesis of the volatile homoterpene (E)-4,8-dimethyl-1,3,7-nonatriene (DMNT) in roots. Involved in the production of DMNT by degrading the triterpene arabidiol. May be involved in the defense again the fungal root pathogen Pythium irregulare by producing DMNT. This Arabidopsis thaliana (Mouse-ear cress) protein is Cytochrome P450 705A1.